Here is a 218-residue protein sequence, read N- to C-terminus: Ropporin-1-like protein (218 aa).

The RIIa domain maps to 17–46 (PELTDILKQFTKAAIRTQPADVLQWSAGYF).

The protein belongs to the ropporin family. As to quaternary structure, component of the axonemal radial spoke complex 1 (RS1), at least composed of spoke head proteins RSPH1, RSPH3, RSPH9 and the cilia-specific component RSPH4A or sperm-specific component RSPH6A, spoke stalk proteins RSPH14, DNAJB13, DYDC1, ROPN1L and NME5, and the anchor protein IQUB. May interact with AKAP3. Interacts with FSCB; the interaction increases upon spermatozoa capacitation conditions. Interacts with CFAP61. In terms of processing, sumoylated, sumoylation decreases upon spermatozoa capacitation conditions.

The protein localises to the cell projection. Its subcellular location is the cilium. It is found in the flagellum. Functionally, functions as part of axonemal radial spoke complexes that play an important part in the motility of sperm and cilia. Important for male fertility. With ROPN1, involved in fibrous sheath integrity and sperm motility, plays a role in PKA-dependent signaling processes required for spermatozoa capacitation. The polypeptide is Ropporin-1-like protein (ROPN1L) (Bos taurus (Bovine)).